The following is a 419-amino-acid chain: Serine hydroxymethyltransferase 2 (419 aa).

(6S)-5,6,7,8-tetrahydrofolate is bound by residues leucine 120 and 124-126 (GHL). Residue lysine 229 is modified to N6-(pyridoxal phosphate)lysine.

This sequence belongs to the SHMT family. In terms of assembly, homodimer. Pyridoxal 5'-phosphate serves as cofactor.

The protein resides in the cytoplasm. It catalyses the reaction (6R)-5,10-methylene-5,6,7,8-tetrahydrofolate + glycine + H2O = (6S)-5,6,7,8-tetrahydrofolate + L-serine. The protein operates within one-carbon metabolism; tetrahydrofolate interconversion. Its pathway is amino-acid biosynthesis; glycine biosynthesis; glycine from L-serine: step 1/1. In terms of biological role, catalyzes the reversible interconversion of serine and glycine with tetrahydrofolate (THF) serving as the one-carbon carrier. This reaction serves as the major source of one-carbon groups required for the biosynthesis of purines, thymidylate, methionine, and other important biomolecules. Also exhibits THF-independent aldolase activity toward beta-hydroxyamino acids, producing glycine and aldehydes, via a retro-aldol mechanism. The polypeptide is Serine hydroxymethyltransferase 2 (Salmonella typhi).